The chain runs to 471 residues: Anthocyanidin 3-O-glucosyltransferase (471 aa).

His-24 (proton acceptor) is an active-site residue. His-24 is a binding site for an anthocyanidin. Residue Asp-130 is the Charge relay of the active site. Thr-152 is a binding site for UDP-alpha-D-glucose. Residue His-161 coordinates an anthocyanidin. Residues Ala-352, Gln-354, His-369, Trp-372, Ser-374, and Glu-377 each contribute to the UDP-alpha-D-glucose site. Gly-392 is an an anthocyanidin binding site. 2 residues coordinate UDP-alpha-D-glucose: Asp-393 and Gln-394.

The protein belongs to the UDP-glycosyltransferase family.

The enzyme catalyses an anthocyanidin + UDP-alpha-D-glucose + H(+) = an anthocyanidin 3-O-beta-D-glucoside + UDP. The protein operates within pigment biosynthesis; anthocyanin biosynthesis. Its function is as follows. In the presence of other necessary color factors, this glycosylation reaction allows the accumulation of anthocyanin pigments. This chain is Anthocyanidin 3-O-glucosyltransferase (BZ1), found in Zea mays (Maize).